A 937-amino-acid polypeptide reads, in one-letter code: DNA mismatch repair protein msh-2 (937 aa).

659 to 666 (GPNMGGKS) is an ATP binding site.

The protein belongs to the DNA mismatch repair MutS family. Heterodimer of msh2 and msh6.

Its subcellular location is the nucleus. Its function is as follows. Involved in post-replicative DNA-mismatch repair. Binds to mismatch-containing DNA. This chain is DNA mismatch repair protein msh-2 (msh-2), found in Neurospora crassa (strain ATCC 24698 / 74-OR23-1A / CBS 708.71 / DSM 1257 / FGSC 987).